The chain runs to 380 residues: Cytochrome b (380 aa).

The next 4 helical transmembrane spans lie at 34 to 54 (FGSL…LLAM), 78 to 99 (WLIR…FLHI), 114 to 134 (WNTG…GYVL), and 179 to 199 (FFAL…VHLT). His-84 and His-98 together coordinate heme b. Residues His-183 and His-197 each contribute to the heme b site. His-202 is an a ubiquinone binding site. Transmembrane regions (helical) follow at residues 227 to 247 (LKDI…ALFS), 289 to 309 (LGGV…PFLH), 321 to 341 (LSQT…WIGS), and 348 to 368 (FMII…ILFP).

This sequence belongs to the cytochrome b family. In terms of assembly, the cytochrome bc1 complex contains 11 subunits: 3 respiratory subunits (MT-CYB, CYC1 and UQCRFS1), 2 core proteins (UQCRC1 and UQCRC2) and 6 low-molecular weight proteins (UQCRH/QCR6, UQCRB/QCR7, UQCRQ/QCR8, UQCR10/QCR9, UQCR11/QCR10 and a cleavage product of UQCRFS1). This cytochrome bc1 complex then forms a dimer. Heme b is required as a cofactor.

The protein localises to the mitochondrion inner membrane. Component of the ubiquinol-cytochrome c reductase complex (complex III or cytochrome b-c1 complex) that is part of the mitochondrial respiratory chain. The b-c1 complex mediates electron transfer from ubiquinol to cytochrome c. Contributes to the generation of a proton gradient across the mitochondrial membrane that is then used for ATP synthesis. The chain is Cytochrome b (MT-CYB) from Gallus lafayettii (Sri Lanka junglefowl).